Consider the following 263-residue polypeptide: uncharacterized protein (263 aa).

ATP is bound at residue 16–23 (AKGGTGKT).

The protein to M.jannaschii MJ0547 and MJ0169.

This is an uncharacterized protein from Methanocaldococcus jannaschii (strain ATCC 43067 / DSM 2661 / JAL-1 / JCM 10045 / NBRC 100440) (Methanococcus jannaschii).